The primary structure comprises 329 residues: Beta-ketoacyl-[acyl-carrier-protein] synthase III (329 aa).

Active-site residues include cysteine 123 and histidine 256. The ACP-binding stretch occupies residues 257-261; it reads QANIR. The active site involves asparagine 286.

Belongs to the thiolase-like superfamily. FabH family. In terms of assembly, homodimer.

Its subcellular location is the cytoplasm. The catalysed reaction is malonyl-[ACP] + acetyl-CoA + H(+) = 3-oxobutanoyl-[ACP] + CO2 + CoA. It functions in the pathway lipid metabolism; fatty acid biosynthesis. In terms of biological role, catalyzes the condensation reaction of fatty acid synthesis by the addition to an acyl acceptor of two carbons from malonyl-ACP. Catalyzes the first condensation reaction which initiates fatty acid synthesis and may therefore play a role in governing the total rate of fatty acid production. Possesses both acetoacetyl-ACP synthase and acetyl transacylase activities. Its substrate specificity determines the biosynthesis of branched-chain and/or straight-chain of fatty acids. The protein is Beta-ketoacyl-[acyl-carrier-protein] synthase III of Burkholderia lata (strain ATCC 17760 / DSM 23089 / LMG 22485 / NCIMB 9086 / R18194 / 383).